The primary structure comprises 233 residues: Ribonuclease 3 (233 aa).

Residues L5–G127 enclose the RNase III domain. E40 contributes to the Mg(2+) binding site. D44 is a catalytic residue. Residues D113 and E116 each contribute to the Mg(2+) site. E116 is a catalytic residue. The DRBM domain maps to D156–A226.

The protein belongs to the ribonuclease III family. Homodimer. Mg(2+) is required as a cofactor.

It localises to the cytoplasm. It catalyses the reaction Endonucleolytic cleavage to 5'-phosphomonoester.. Its function is as follows. Digests double-stranded RNA. Involved in the processing of primary rRNA transcript to yield the immediate precursors to the large and small rRNAs (23S and 16S). Processes some mRNAs, and tRNAs when they are encoded in the rRNA operon. Processes pre-crRNA and tracrRNA of type II CRISPR loci if present in the organism. This chain is Ribonuclease 3, found in Nitrosococcus oceani (strain ATCC 19707 / BCRC 17464 / JCM 30415 / NCIMB 11848 / C-107).